A 341-amino-acid chain; its full sequence is tRNA N6-adenosine threonylcarbamoyltransferase (341 aa).

Residues histidine 111 and histidine 115 each contribute to the Fe cation site. Substrate is bound by residues 134–138 (LVSGG), aspartate 167, glycine 180, and asparagine 276. Aspartate 304 lines the Fe cation pocket.

Belongs to the KAE1 / TsaD family. Fe(2+) serves as cofactor.

The protein localises to the cytoplasm. It carries out the reaction L-threonylcarbamoyladenylate + adenosine(37) in tRNA = N(6)-L-threonylcarbamoyladenosine(37) in tRNA + AMP + H(+). Required for the formation of a threonylcarbamoyl group on adenosine at position 37 (t(6)A37) in tRNAs that read codons beginning with adenine. Is involved in the transfer of the threonylcarbamoyl moiety of threonylcarbamoyl-AMP (TC-AMP) to the N6 group of A37, together with TsaE and TsaB. TsaD likely plays a direct catalytic role in this reaction. The chain is tRNA N6-adenosine threonylcarbamoyltransferase from Azotobacter vinelandii (strain DJ / ATCC BAA-1303).